A 675-amino-acid polypeptide reads, in one-letter code: DNA ligase 1 (675 aa).

NAD(+) contacts are provided by residues 34 to 38 (DFEYD), 83 to 84 (SL), and glutamate 114. Lysine 116 acts as the N6-AMP-lysine intermediate in catalysis. Residues arginine 137, glutamate 177, lysine 295, and lysine 319 each coordinate NAD(+). Residues cysteine 413, cysteine 416, cysteine 431, and cysteine 436 each contribute to the Zn(2+) site. The region spanning 596 to 675 (NSGSALAGKT…AEFLRLLSGG (80 aa)) is the BRCT domain.

Belongs to the NAD-dependent DNA ligase family. LigA subfamily. It depends on Mg(2+) as a cofactor. Mn(2+) is required as a cofactor.

It carries out the reaction NAD(+) + (deoxyribonucleotide)n-3'-hydroxyl + 5'-phospho-(deoxyribonucleotide)m = (deoxyribonucleotide)n+m + AMP + beta-nicotinamide D-nucleotide.. DNA ligase that catalyzes the formation of phosphodiester linkages between 5'-phosphoryl and 3'-hydroxyl groups in double-stranded DNA using NAD as a coenzyme and as the energy source for the reaction. It is essential for DNA replication and repair of damaged DNA. This chain is DNA ligase 1, found in Opitutus terrae (strain DSM 11246 / JCM 15787 / PB90-1).